The sequence spans 105 residues: Guanidinium exporter (105 aa).

The chain crosses the membrane as a helical span at residues 1–21; sequence MSWIILVIAGLLEVVWAVGLK. Residues 22-28 are Cytoplasmic-facing; it reads YTHGFSR. The chain crosses the membrane as a helical span at residues 29-49; the sequence is LTPSVITVTAMIVSMALLAWA. The Periplasmic segment spans residues 50-57; the sequence is MKSLPVGT. Residues 58–78 traverse the membrane as a helical segment; the sequence is AYAVWTGIGAVGAAITGIVLL. Over 79–81 the chain is Cytoplasmic; it reads GES. The helical transmembrane segment at 82-102 threads the bilayer; that stretch reads ANPMRLASLALIVLGIIGLKL. Residues 103 to 105 lie on the Periplasmic side of the membrane; that stretch reads STH.

Belongs to the drug/metabolite transporter (DMT) superfamily. Small multidrug resistance (SMR) (TC 2.A.7.1) family. Gdx/SugE subfamily.

The protein resides in the cell inner membrane. In terms of biological role, guanidinium ion exporter. Couples guanidinium export to the proton motive force, exchanging one guanidinium ion for two protons. This Escherichia coli O157:H7 protein is Guanidinium exporter.